Here is a 233-residue protein sequence, read N- to C-terminus: Small ribosomal subunit protein uS7m (233 aa).

A mitochondrion-targeting transit peptide spans 1–28 (MAAPTAAGLCPRLRAWLPRLTQVRWSRY).

The protein belongs to the universal ribosomal protein uS7 family. Component of the mitochondrial ribosome small subunit (28S) which comprises a 12S rRNA and about 30 distinct proteins.

The protein localises to the mitochondrion. The polypeptide is Small ribosomal subunit protein uS7m (MRPS7) (Gallus gallus (Chicken)).